A 302-amino-acid chain; its full sequence is Sulfate adenylyltransferase subunit 2 (302 aa).

Residues 280 to 302 (RQGRAIDHDQSGSMELKKRQGYF) are disordered.

The protein belongs to the PAPS reductase family. CysD subfamily. Heterodimer composed of CysD, the smaller subunit, and CysN.

The catalysed reaction is sulfate + ATP + H(+) = adenosine 5'-phosphosulfate + diphosphate. Its pathway is sulfur metabolism; hydrogen sulfide biosynthesis; sulfite from sulfate: step 1/3. Its function is as follows. With CysN forms the ATP sulfurylase (ATPS) that catalyzes the adenylation of sulfate producing adenosine 5'-phosphosulfate (APS) and diphosphate, the first enzymatic step in sulfur assimilation pathway. APS synthesis involves the formation of a high-energy phosphoric-sulfuric acid anhydride bond driven by GTP hydrolysis by CysN coupled to ATP hydrolysis by CysD. This is Sulfate adenylyltransferase subunit 2 from Vibrio atlanticus (strain LGP32) (Vibrio splendidus (strain Mel32)).